Consider the following 204-residue polypeptide: 8-oxoguanine DNA glycosylase/AP lyase (204 aa).

Residues K129 and D147 contribute to the active site.

It belongs to the type-2 OGG1 family.

The enzyme catalyses 2'-deoxyribonucleotide-(2'-deoxyribose 5'-phosphate)-2'-deoxyribonucleotide-DNA = a 3'-end 2'-deoxyribonucleotide-(2,3-dehydro-2,3-deoxyribose 5'-phosphate)-DNA + a 5'-end 5'-phospho-2'-deoxyribonucleoside-DNA + H(+). In terms of biological role, catalyzes the excision of an oxidatively damaged form of guanine (7,8-dihydro-8-oxoguanine = 8-oxoG) from DNA. Also cleaves the DNA backbone at apurinic/apyrimidinic sites (AP sites). Prefers oligomers containing 8-oxoG:C, 8-oxoG:T and 8-oxoG:G base pairs, and is less effective on oligomers containing 8-oxoG:A mispairs. This is 8-oxoguanine DNA glycosylase/AP lyase from Thermoplasma volcanium (strain ATCC 51530 / DSM 4299 / JCM 9571 / NBRC 15438 / GSS1).